A 148-amino-acid polypeptide reads, in one-letter code: Large ribosomal subunit protein bL9 (148 aa).

It belongs to the bacterial ribosomal protein bL9 family.

Binds to the 23S rRNA. The chain is Large ribosomal subunit protein bL9 from Thermus thermophilus (strain ATCC BAA-163 / DSM 7039 / HB27).